The primary structure comprises 191 residues: Potassium-transporting ATPase KdpC subunit (191 aa).

A helical transmembrane segment spans residues 6–26; the sequence is PALVLFILLTLLTGGVYPLLT.

It belongs to the KdpC family. As to quaternary structure, the system is composed of three essential subunits: KdpA, KdpB and KdpC.

The protein resides in the cell inner membrane. In terms of biological role, part of the high-affinity ATP-driven potassium transport (or Kdp) system, which catalyzes the hydrolysis of ATP coupled with the electrogenic transport of potassium into the cytoplasm. This subunit acts as a catalytic chaperone that increases the ATP-binding affinity of the ATP-hydrolyzing subunit KdpB by the formation of a transient KdpB/KdpC/ATP ternary complex. The chain is Potassium-transporting ATPase KdpC subunit from Klebsiella pneumoniae (strain 342).